We begin with the raw amino-acid sequence, 502 residues long: Glycerol kinase (502 aa).

Thr-16 is an ADP binding site. ATP is bound by residues Thr-16, Thr-17, and Ser-18. Thr-16 contacts sn-glycerol 3-phosphate. Residue Arg-20 participates in ADP binding. Residues Arg-86, Glu-87, Tyr-138, and Asp-247 each contribute to the sn-glycerol 3-phosphate site. The glycerol site is built by Arg-86, Glu-87, Tyr-138, Asp-247, and Gln-248. Residues Thr-269 and Gly-312 each coordinate ADP. ATP-binding residues include Thr-269, Gly-312, Gln-316, and Gly-413. Residues Gly-413 and Asn-417 each contribute to the ADP site.

The protein belongs to the FGGY kinase family.

It catalyses the reaction glycerol + ATP = sn-glycerol 3-phosphate + ADP + H(+). Its pathway is polyol metabolism; glycerol degradation via glycerol kinase pathway; sn-glycerol 3-phosphate from glycerol: step 1/1. Its activity is regulated as follows. Inhibited by fructose 1,6-bisphosphate (FBP). Functionally, key enzyme in the regulation of glycerol uptake and metabolism. Catalyzes the phosphorylation of glycerol to yield sn-glycerol 3-phosphate. This chain is Glycerol kinase, found in Dechloromonas aromatica (strain RCB).